Reading from the N-terminus, the 456-residue chain is Bifunctional protein GlmU (456 aa).

A pyrophosphorylase region spans residues 1–228 (MSARLAAIVL…PQEIFGINDR (228 aa)). Residues 10 to 13 (LAAG), Lys24, Gln75, and 80 to 81 (GT) contribute to the UDP-N-acetyl-alpha-D-glucosamine site. A Mg(2+)-binding site is contributed by Asp105. Residues Gly142, Glu157, Asn172, and Asn226 each contribute to the UDP-N-acetyl-alpha-D-glucosamine site. Residue Asn226 coordinates Mg(2+). The segment at 229–249 (LQLSQASRILNERTLVGLMLS) is linker. Positions 250–456 (GVTIVDPLRV…KAPYERTEDG (207 aa)) are N-acetyltransferase. Arg331 and Lys349 together coordinate UDP-N-acetyl-alpha-D-glucosamine. The Proton acceptor role is filled by His361. Positions 364 and 375 each coordinate UDP-N-acetyl-alpha-D-glucosamine. Residues Ala378, 384–385 (NY), Ala421, and Arg437 contribute to the acetyl-CoA site.

It in the N-terminal section; belongs to the N-acetylglucosamine-1-phosphate uridyltransferase family. This sequence in the C-terminal section; belongs to the transferase hexapeptide repeat family. As to quaternary structure, homotrimer. Mg(2+) is required as a cofactor.

It is found in the cytoplasm. The enzyme catalyses alpha-D-glucosamine 1-phosphate + acetyl-CoA = N-acetyl-alpha-D-glucosamine 1-phosphate + CoA + H(+). It carries out the reaction N-acetyl-alpha-D-glucosamine 1-phosphate + UTP + H(+) = UDP-N-acetyl-alpha-D-glucosamine + diphosphate. It functions in the pathway nucleotide-sugar biosynthesis; UDP-N-acetyl-alpha-D-glucosamine biosynthesis; N-acetyl-alpha-D-glucosamine 1-phosphate from alpha-D-glucosamine 6-phosphate (route II): step 2/2. It participates in nucleotide-sugar biosynthesis; UDP-N-acetyl-alpha-D-glucosamine biosynthesis; UDP-N-acetyl-alpha-D-glucosamine from N-acetyl-alpha-D-glucosamine 1-phosphate: step 1/1. Its pathway is bacterial outer membrane biogenesis; LPS lipid A biosynthesis. Functionally, catalyzes the last two sequential reactions in the de novo biosynthetic pathway for UDP-N-acetylglucosamine (UDP-GlcNAc). The C-terminal domain catalyzes the transfer of acetyl group from acetyl coenzyme A to glucosamine-1-phosphate (GlcN-1-P) to produce N-acetylglucosamine-1-phosphate (GlcNAc-1-P), which is converted into UDP-GlcNAc by the transfer of uridine 5-monophosphate (from uridine 5-triphosphate), a reaction catalyzed by the N-terminal domain. This Gloeobacter violaceus (strain ATCC 29082 / PCC 7421) protein is Bifunctional protein GlmU.